A 109-amino-acid chain; its full sequence is Nucleoid-associated protein Sputw3181_1707 (109 aa).

Belongs to the YbaB/EbfC family. As to quaternary structure, homodimer.

The protein resides in the cytoplasm. It is found in the nucleoid. Binds to DNA and alters its conformation. May be involved in regulation of gene expression, nucleoid organization and DNA protection. The sequence is that of Nucleoid-associated protein Sputw3181_1707 from Shewanella sp. (strain W3-18-1).